Consider the following 539-residue polypeptide: Glutamate/serine transporter AimA (539 aa).

13 consecutive transmembrane segments (helical) span residues 11 to 31 (FSLM…FGAW), 36 to 56 (IAGP…LFIA), 82 to 102 (SFIG…VIPV), 137 to 157 (AFAS…VNLF), 164 to 184 (ITIF…FVGF), 199 to 219 (GWAS…FNGF), 238 to 258 (IAVV…QIAF), 283 to 303 (LAIA…AFVS), 350 to 370 (LIVS…AEII), 401 to 421 (LKGL…VLYW), 424 to 444 (WPLT…YFYY), 457 to 477 (FKAG…SYLG), and 486 to 506 (VIHY…FYVW).

This sequence belongs to the amino acid-polyamine-organocation (APC) superfamily. AGT (TC 2.A.3.11) family.

The protein localises to the cell membrane. Functionally, major glutamate and serine transporter. Cannot transport threonine. AimA is the major glutamate transporter under standard growth conditions when glutamate is not limiting in the medium. The chain is Glutamate/serine transporter AimA from Bacillus subtilis (strain 168).